Reading from the N-terminus, the 145-residue chain is Small ribosomal subunit protein uS12 (145 aa).

Hydroxyproline is present on Pro-64.

Belongs to the universal ribosomal protein uS12 family.

The polypeptide is Small ribosomal subunit protein uS12 (rps23) (Aspergillus fumigatus (strain ATCC MYA-4609 / CBS 101355 / FGSC A1100 / Af293) (Neosartorya fumigata)).